The sequence spans 359 residues: Histidinol-phosphate aminotransferase 1 (359 aa).

Lys-216 bears the N6-(pyridoxal phosphate)lysine mark.

It belongs to the class-II pyridoxal-phosphate-dependent aminotransferase family. Histidinol-phosphate aminotransferase subfamily. Homodimer. The cofactor is pyridoxal 5'-phosphate.

The catalysed reaction is L-histidinol phosphate + 2-oxoglutarate = 3-(imidazol-4-yl)-2-oxopropyl phosphate + L-glutamate. It participates in amino-acid biosynthesis; L-histidine biosynthesis; L-histidine from 5-phospho-alpha-D-ribose 1-diphosphate: step 7/9. This Caulobacter vibrioides (strain ATCC 19089 / CIP 103742 / CB 15) (Caulobacter crescentus) protein is Histidinol-phosphate aminotransferase 1 (hisC1).